A 473-amino-acid chain; its full sequence is Adenosylhomocysteinase (473 aa).

The substrate site is built by threonine 64, aspartate 139, and glutamate 199. NAD(+) is bound at residue 200 to 202 (TTT). Substrate is bound by residues lysine 229 and aspartate 233. Residues asparagine 234, 263-268 (GYGDVG), glutamate 286, asparagine 321, 342-344 (IGH), and asparagine 387 contribute to the NAD(+) site.

This sequence belongs to the adenosylhomocysteinase family. NAD(+) serves as cofactor.

The protein resides in the cytoplasm. It carries out the reaction S-adenosyl-L-homocysteine + H2O = L-homocysteine + adenosine. It participates in amino-acid biosynthesis; L-homocysteine biosynthesis; L-homocysteine from S-adenosyl-L-homocysteine: step 1/1. In terms of biological role, may play a key role in the regulation of the intracellular concentration of adenosylhomocysteine. The sequence is that of Adenosylhomocysteinase from Paraburkholderia xenovorans (strain LB400).